A 241-amino-acid chain; its full sequence is Histidine-rich protein PFHRP-III (241 aa).

The N-terminal stretch at 1-21 (MVSFSKNKVLSAAVFASVLLL) is a signal peptide. A compositionally biased stretch (basic and acidic residues) spans 52-76 (AHAGDAHHAHHVADAHHAHHVADAH). 2 disordered regions span residues 52 to 145 (AHAG…ANAH) and 195 to 241 (AHHD…HLHH). Residues 84–145 (AHHAANAHHA…ANAHHAANAH (62 aa)) show a composition bias toward low complexity. The span at 195 to 231 (AHHDGAHHDDAHHDGAHHDDAHHDGAHHDGAHHDGAH) shows a compositional bias: basic and acidic residues.

This Plasmodium falciparum protein is Histidine-rich protein PFHRP-III.